A 349-amino-acid polypeptide reads, in one-letter code: Acyl-CoA Delta(11) desaturase (349 aa).

Helical transmembrane passes span 41–61 (FLTF…CFTS) and 66–86 (TLLF…AGAH). A Histidine box-1 motif is present at residues 86 to 91 (HRLWTH). The Histidine box-2 signature appears at 123-127 (HRLHH). Residues 184-204 (AVPLIGTVCFALPTLIPVYCW) form a helical membrane-spanning segment. A Histidine box-3 motif is present at residues 263–267 (HNYHH). A helical transmembrane segment spans residues 282–302 (FLNLTTLFIDFCAWFGWAYDL).

It belongs to the fatty acid desaturase type 1 family. It depends on Fe cation as a cofactor. As to expression, adult female pheromone gland. Increases by two or three orders of magnitude during the first 2 days after adult eclosion.

Its subcellular location is the endoplasmic reticulum membrane. The catalysed reaction is an 11,12-saturated fatty acyl-CoA + 2 Fe(II)-[cytochrome b5] + O2 + 2 H(+) = an (11Z)-Delta(11)-fatty acyl-CoA + 2 Fe(III)-[cytochrome b5] + 2 H2O. Its function is as follows. Catalyzes the formation of Delta(11) fatty acyl precursors in the pheromone gland. The polypeptide is Acyl-CoA Delta(11) desaturase (D11DS) (Trichoplusia ni (Cabbage looper)).